The chain runs to 309 residues: Porphobilinogen deaminase (309 aa).

An S-(dipyrrolylmethanemethyl)cysteine modification is found at Cys241.

Belongs to the HMBS family. Monomer. Dipyrromethane is required as a cofactor.

The catalysed reaction is 4 porphobilinogen + H2O = hydroxymethylbilane + 4 NH4(+). Its pathway is porphyrin-containing compound metabolism; protoporphyrin-IX biosynthesis; coproporphyrinogen-III from 5-aminolevulinate: step 2/4. Its function is as follows. Tetrapolymerization of the monopyrrole PBG into the hydroxymethylbilane pre-uroporphyrinogen in several discrete steps. The sequence is that of Porphobilinogen deaminase from Bacillus cereus (strain ATCC 10987 / NRS 248).